We begin with the raw amino-acid sequence, 267 residues long: Pyridoxine/pyridoxamine 5'-phosphate oxidase (267 aa).

Substrate-binding positions include 20 to 23 and Lys-80; that span reads RQGY. Residues 75–80, 90–91, Arg-96, Lys-97, and Gln-119 contribute to the FMN site; these read RTVLLK and YT. 3 residues coordinate substrate: Tyr-137, Arg-141, and Ser-145. FMN contacts are provided by residues 154-155 and Trp-200; that span reads QS. 206–208 serves as a coordination point for substrate; sequence RLH. Arg-210 is an FMN binding site.

This sequence belongs to the pyridoxamine 5'-phosphate oxidase family. In terms of assembly, homodimer. The cofactor is FMN.

It carries out the reaction pyridoxamine 5'-phosphate + O2 + H2O = pyridoxal 5'-phosphate + H2O2 + NH4(+). The enzyme catalyses pyridoxine 5'-phosphate + O2 = pyridoxal 5'-phosphate + H2O2. It functions in the pathway cofactor metabolism; pyridoxal 5'-phosphate salvage; pyridoxal 5'-phosphate from pyridoxamine 5'-phosphate: step 1/1. The protein operates within cofactor metabolism; pyridoxal 5'-phosphate salvage; pyridoxal 5'-phosphate from pyridoxine 5'-phosphate: step 1/1. Functionally, catalyzes the oxidation of either pyridoxine 5'-phosphate (PNP) or pyridoxamine 5'-phosphate (PMP) into pyridoxal 5'-phosphate (PLP). The chain is Pyridoxine/pyridoxamine 5'-phosphate oxidase from Frankia casuarinae (strain DSM 45818 / CECT 9043 / HFP020203 / CcI3).